The sequence spans 237 residues: Demethylmenaquinone methyltransferase (237 aa).

Residues threonine 58, aspartate 79, and 106–107 (NA) contribute to the S-adenosyl-L-methionine site.

This sequence belongs to the class I-like SAM-binding methyltransferase superfamily. MenG/UbiE family.

It carries out the reaction a 2-demethylmenaquinol + S-adenosyl-L-methionine = a menaquinol + S-adenosyl-L-homocysteine + H(+). It functions in the pathway quinol/quinone metabolism; menaquinone biosynthesis; menaquinol from 1,4-dihydroxy-2-naphthoate: step 2/2. In terms of biological role, methyltransferase required for the conversion of demethylmenaquinol (DMKH2) to menaquinol (MKH2). The polypeptide is Demethylmenaquinone methyltransferase (Bacillus mycoides (strain KBAB4) (Bacillus weihenstephanensis)).